Reading from the N-terminus, the 338-residue chain is mRNA decay activator protein ZFP36L1 (338 aa).

The necessary and sufficient for the association with mRNA decay enzymes and mRNA decay activation stretch occupies residues 1–111 (MTTTLVSATI…QKQPGSGQVN (111 aa)). Residue serine 54 is modified to Phosphoserine; by MAPKAPK2. Serine 90 is subject to Phosphoserine; by PKB/AKT1. Serine 92 is modified (phosphoserine; by PKB/AKT1 and MAPKAPK2). The interval 93-113 (EGGERLLPTQKQPGSGQVNSS) is disordered. Positions 101–113 (TQKQPGSGQVNSS) are enriched in polar residues. C3H1-type zinc fingers lie at residues 114-142 (RYKT…HGIH) and 152-180 (KYKT…HNAE). Residues 185 to 338 (LAGGRDLSAD…IFSRLSISDD (154 aa)) are necessary for mRNA decay activation. Phosphoserine; by PKB/AKT1 and MAPKAPK2 is present on serine 203. The tract at residues 273-338 (SPTTFLFRPM…IFSRLSISDD (66 aa)) is disordered. Positions 305-318 (YLSSSSSSHSGSDS) are enriched in low complexity. Serine 318 carries the phosphoserine modification. Serine 334 is modified (phosphoserine; by RPS6KA1).

Associates with the cytoplasmic CCR4-NOT deadenylase and RNA exosome complexes to trigger ARE-containing mRNA deadenylation and decay processes. Interacts with CNOT1. Interacts (via N-terminus) with CNOT6. Interacts with CNOT7; this interaction is inhibited in response to phorbol 12-myristate 13-acetate (PMA) treatment in a p38 MAPK-dependent manner. Interacts with DCP1A. Interacts (via N-terminus) with DCP2. Interacts (via N-terminus) with EXOSC2. Interacts with XRN1. Interacts (via phosphorylated form) with YWHAB; this interaction occurs in a protein kinase AKT1-dependent manner. Interacts (via phosphorylated form) with YWHAZ; this interaction occurs in a p38 MAPK- and AKT-signaling pathways. Post-translationally, phosphorylated. Phosphorylated by RPS6KA1 at Ser-334 upon phorbol 12-myristate 13-acetate (PMA) treatment; this phosphorylation results in dissociation of the CCR4-NOT deadenylase complex and induces p38 MAPK-mediated stabilization of the low-density lipoprotein receptor LDLR mRNA. Phosphorylated by protein kinase AKT1 at Ser-92 and Ser-203 in response to insulin; these phosphorylations stabilize ZFP36L1, increase the association with 14-3-3 proteins and mediate ARE-containing mRNA stabilization. AKT1-mediated phosphorylation at Ser-92 does not impair ARE-containing RNA-binding. Phosphorylated at Ser-54, Ser-92 and Ser-203 by MAPKAPK2; these phosphorylations increase the association with 14-3-3 proteins and mediate ARE-containing mRNA stabilization in a protein kinase AKT1-independent manner. MAPKAPK2-mediated phosphorylations at Ser-54, Ser-92 and Ser-203 do not impair ARE-containing RNA-binding. Phosphorylations increase the association with 14-3-3 proteins and mediate ARE-containing mRNA stabilization during early adipogenesis in a p38 MAPK- and AKT-dependent manner. Phosphorylated by protein kinase AKT1 at Ser-92. Ubiquitinated. Ubiquitination leads to proteasomal degradation, a process inhibited by phosphorylations at Ser-90, Ser-92 and Ser-203.

The protein localises to the nucleus. Its subcellular location is the cytoplasm. It localises to the cytoplasmic granule. It is found in the P-body. Its function is as follows. Zinc-finger RNA-binding protein that destabilizes several cytoplasmic AU-rich element (ARE)-containing mRNA transcripts by promoting their poly(A) tail removal or deadenylation, and hence provide a mechanism for attenuating protein synthesis. Acts as a 3'-untranslated region (UTR) ARE mRNA-binding adapter protein to communicate signaling events to the mRNA decay machinery. Functions by recruiting the CCR4-NOT deadenylase complex and components of the cytoplasmic RNA decay machinery to the bound ARE-containing mRNAs, and hence promotes ARE-mediated mRNA deadenylation and decay processes. Also induces the degradation of ARE-containing mRNAs even in absence of poly(A) tail. Binds to 3'-UTR ARE of numerous mRNAs. Positively regulates early adipogenesis by promoting ARE-mediated mRNA decay of immediate early genes (IEGs). Promotes ARE-mediated mRNA decay of mineralocorticoid receptor NR3C2 mRNA in response to hypertonic stress. Negatively regulates hematopoietic/erythroid cell differentiation by promoting ARE-mediated mRNA decay of the transcription factor STAT5B mRNA. Positively regulates monocyte/macrophage cell differentiation by promoting ARE-mediated mRNA decay of the cyclin-dependent kinase CDK6 mRNA. Promotes degradation of ARE-containing pluripotency-associated mRNAs in embryonic stem cells (ESCs), such as NANOG, through a fibroblast growth factor (FGF)-induced MAPK-dependent signaling pathway, and hence attenuates ESC self-renewal and positively regulates mesendoderm differentiation. May play a role in mediating pro-apoptotic effects in malignant B-cells by promoting ARE-mediated mRNA decay of BCL2 mRNA. In association with ZFP36L2 maintains quiescence on developing B lymphocytes by promoting ARE-mediated decay of several mRNAs encoding cell cycle regulators that help B cells progress through the cell cycle, and hence ensuring accurate variable-diversity-joining (VDJ) recombination and functional immune cell formation. Together with ZFP36L2 is also necessary for thymocyte development and prevention of T-cell acute lymphoblastic leukemia (T-ALL) transformation by promoting ARE-mediated mRNA decay of the oncogenic transcription factor NOTCH1 mRNA. Participates in the delivery of target ARE-mRNAs to processing bodies (PBs). In addition to its cytosolic mRNA-decay function, plays a role in the regulation of nuclear mRNA 3'-end processing; modulates mRNA 3'-end maturation efficiency of the DLL4 mRNA through binding with an ARE embedded in a weak noncanonical polyadenylation (poly(A)) signal in endothelial cells. Also involved in the regulation of stress granule (SG) and P-body (PB) formation and fusion. Plays a role in vasculogenesis and endocardial development. Plays a role in the regulation of keratinocyte proliferation, differentiation and apoptosis. Plays a role in myoblast cell differentiation. The polypeptide is mRNA decay activator protein ZFP36L1 (Rattus norvegicus (Rat)).